The following is a 145-amino-acid chain: Cell wall teichoic acid glycosylation protein GtcA (145 aa).

4 helical membrane-spanning segments follow: residues 21-41 (ILMY…TFWL), 52-69 (IANT…YFSN), 96-116 (FLTY…LSIN), and 121-141 (KIWT…WIIF).

Belongs to the GtrA family.

It localises to the cell membrane. Functionally, involved in the decoration of cell wall teichoic acid with galactose and glucose. The sequence is that of Cell wall teichoic acid glycosylation protein GtcA (gtcA) from Listeria monocytogenes serovar 1/2a (strain ATCC BAA-679 / EGD-e).